The following is a 319-amino-acid chain: Aliphatic sulfonates import ATP-binding protein SsuB 1 (319 aa).

Residues 63-282 (VTLSGVSKRF…ARASAAFAAL (220 aa)) enclose the ABC transporter domain. 95–102 (GRSGCGKS) contacts ATP.

It belongs to the ABC transporter superfamily. Aliphatic sulfonates importer (TC 3.A.1.17.2) family. As to quaternary structure, the complex is composed of two ATP-binding proteins (SsuB), two transmembrane proteins (SsuC) and a solute-binding protein (SsuA).

The protein resides in the cell inner membrane. The catalysed reaction is ATP + H2O + aliphatic sulfonate-[sulfonate-binding protein]Side 1 = ADP + phosphate + aliphatic sulfonateSide 2 + [sulfonate-binding protein]Side 1.. In terms of biological role, part of the ABC transporter complex SsuABC involved in aliphatic sulfonates import. Responsible for energy coupling to the transport system. The sequence is that of Aliphatic sulfonates import ATP-binding protein SsuB 1 from Burkholderia lata (strain ATCC 17760 / DSM 23089 / LMG 22485 / NCIMB 9086 / R18194 / 383).